A 250-amino-acid polypeptide reads, in one-letter code: 5'/3'-nucleotidase SurE (250 aa).

The a divalent metal cation site is built by Asp9, Asp10, Ser40, and Asn93.

The protein belongs to the SurE nucleotidase family. The cofactor is a divalent metal cation.

The protein resides in the cytoplasm. The catalysed reaction is a ribonucleoside 5'-phosphate + H2O = a ribonucleoside + phosphate. The enzyme catalyses a ribonucleoside 3'-phosphate + H2O = a ribonucleoside + phosphate. It carries out the reaction [phosphate](n) + H2O = [phosphate](n-1) + phosphate + H(+). Nucleotidase with a broad substrate specificity as it can dephosphorylate various ribo- and deoxyribonucleoside 5'-monophosphates and ribonucleoside 3'-monophosphates with highest affinity to 3'-AMP. Also hydrolyzes polyphosphate (exopolyphosphatase activity) with the preference for short-chain-length substrates (P20-25). Might be involved in the regulation of dNTP and NTP pools, and in the turnover of 3'-mononucleotides produced by numerous intracellular RNases (T1, T2, and F) during the degradation of various RNAs. This is 5'/3'-nucleotidase SurE from Yersinia enterocolitica serotype O:8 / biotype 1B (strain NCTC 13174 / 8081).